The sequence spans 106 residues: Ig kappa chain C region, A allele (106 aa).

An Ig-like domain is found at 5-102; it reads PTVSIFPPSM…SSSPVVKSFN (98 aa). An intrachain disulfide couples cysteine 26 to cysteine 86.

This is Ig kappa chain C region, A allele from Rattus norvegicus (Rat).